The chain runs to 290 residues: MRDRLPDLTACRKSDDGDNAVIITVEKDHFMDAFFHQVEEIRSSIARIAQHVEDVKKNHSIILSAPNPEGKIKEELEDLNKEIKKTANRIRGKLKAIEQSCDQDENGNRTSVDLRIRRTQHSVLSRKFVDVMTEYNEAQILFRERSKGRIQRQLEITGRTTTDEELEEMLESGKPSIFISDIISDSQITRQALNEIESRHKDIMKLETSIRELHEMFMDMAMFVETQGEMVNNIERNVVNSVDYVEHAKEETKKAIKYQSKARRKKWIIAAVVVAVIAVLALIIGLTVGK.

Topologically, residues 1 to 266 (MRDRLPDLTA…KYQSKARRKK (266 aa)) are cytoplasmic. Serine 14 bears the Phosphoserine mark. A coiled-coil region spans residues 69-106 (EGKIKEELEDLNKEIKKTANRIRGKLKAIEQSCDQDEN). The t-SNARE coiled-coil homology domain occupies 193–255 (LNEIESRHKD…EHAKEETKKA (63 aa)). Residues 267 to 290 (WIIAAVVVAVIAVLALIIGLTVGK) form a helical; Anchor for type IV membrane protein membrane-spanning segment.

Belongs to the syntaxin family. Interacts with SYT6 and SYT8; the interaction is Ca(2+)-dependent. Heart, spleen, liver, and testis.

It localises to the membrane. Functionally, essential for epithelial morphogenesis. May mediate Ca(2+)-regulation of exocytosis acrosomal reaction in sperm. The polypeptide is Syntaxin-2 (Stx2) (Rattus norvegicus (Rat)).